The following is a 447-amino-acid chain: Gamma-glutamyl phosphate reductase (447 aa).

The protein belongs to the gamma-glutamyl phosphate reductase family.

The protein localises to the cytoplasm. The enzyme catalyses L-glutamate 5-semialdehyde + phosphate + NADP(+) = L-glutamyl 5-phosphate + NADPH + H(+). It participates in amino-acid biosynthesis; L-proline biosynthesis; L-glutamate 5-semialdehyde from L-glutamate: step 2/2. Its function is as follows. Catalyzes the NADPH-dependent reduction of L-glutamate 5-phosphate into L-glutamate 5-semialdehyde and phosphate. The product spontaneously undergoes cyclization to form 1-pyrroline-5-carboxylate. This is Gamma-glutamyl phosphate reductase from Methanosarcina acetivorans (strain ATCC 35395 / DSM 2834 / JCM 12185 / C2A).